A 355-amino-acid polypeptide reads, in one-letter code: Blue-sensitive opsin (355 aa).

The Extracellular portion of the chain corresponds to 1–41; that stretch reads MKSRPQEFQEDFYIPIPLDTNNITALSPFLVPQDHLGGSGI. Asparagine 22 carries an N-linked (GlcNAc...) asparagine glycan. Residues 42 to 66 traverse the membrane as a helical segment; that stretch reads FMIMTVFMLFLFIGGTSINVLTIVC. Over 67 to 78 the chain is Cytoplasmic; that stretch reads TVQYKKLRSHLN. A helical membrane pass occupies residues 79–104; the sequence is YILVNLAISNLLVSTVGSFTAFVSFL. Residues 105-118 are Extracellular-facing; it reads NRYFIFGPTACKIE. Residues cysteine 115 and cysteine 192 are joined by a disulfide bond. A helical membrane pass occupies residues 119-138; the sequence is GFVATLGGMVSLWSLSVVAF. Residues 139 to 157 are Cytoplasmic-facing; that stretch reads ERWLVICKPVGNFSFKGTH. The chain crosses the membrane as a helical span at residues 158–181; that stretch reads AIIGCALTWFFALLASTPPLFGWS. Residues 182-207 are Extracellular-facing; that stretch reads RYIPEGLQCSCGPDWYTTENKYNNES. N-linked (GlcNAc...) asparagine glycosylation occurs at asparagine 205. Residues 208 to 235 traverse the membrane as a helical segment; sequence YVMFLFCFCFGFPFTVILFCYGQLLFTL. Residues 236 to 257 lie on the Cytoplasmic side of the membrane; sequence KSAAKAQADSASTQKAEREVTK. Residues 258-281 traverse the membrane as a helical segment; sequence MVVVMVMGFLVCWLPYASFALWVV. Over 282-289 the chain is Extracellular; sequence FNRGQSFD. A helical membrane pass occupies residues 290–314; the sequence is LRLGTIPSCFSKASTVYNPVIYVFM. The residue at position 301 (lysine 301) is an N6-(retinylidene)lysine. The Cytoplasmic portion of the chain corresponds to 315–355; it reads NKQFRSCMMKLIFCGKSPFGDDEEASSSSQVTQVSSVGPEK. Positions 334 to 355 are disordered; sequence GDDEEASSSSQVTQVSSVGPEK. The span at 340–355 shows a compositional bias: low complexity; it reads SSSSQVTQVSSVGPEK.

This sequence belongs to the G-protein coupled receptor 1 family. Opsin subfamily. Phosphorylated on some or all of the serine and threonine residues present in the C-terminal region. As to expression, the color pigments are found in the cone photoreceptor cells.

It is found in the membrane. Its function is as follows. Visual pigments are the light-absorbing molecules that mediate vision. They consist of an apoprotein, opsin, covalently linked to cis-retinal. The sequence is that of Blue-sensitive opsin (B23) from Psalidodon fasciatus (Banded astyanax).